Consider the following 352-residue polypeptide: Sulfate-binding protein (352 aa).

An N-terminal signal peptide occupies residues Met1–Gln40.

Belongs to the prokaryotic sulfate-binding protein family.

The protein resides in the periplasm. Its function is as follows. This protein specifically binds sulfate and is involved in its transmembrane transport. The chain is Sulfate-binding protein (sbpA) from Synechocystis sp. (strain ATCC 27184 / PCC 6803 / Kazusa).